The following is a 179-amino-acid chain: MENFNQIFTLLAENEGIGLNTDILETGIINIAALVGILIYAGRDFLGSFLEQRKTSIVQGVQDAEGRLEEANRRLSEAQKQLSQAHIVISEIKNETISAKKVLLESDAYQAKKDLTTRFSRALATFRSKERQIFLEVKEQIILLVLKRTVARAQQTFGPKERATALITETINKLEGDLL.

A helical transmembrane segment spans residues 28–46 (IINIAALVGILIYAGRDFL).

It belongs to the ATPase B chain family. As to quaternary structure, F-type ATPases have 2 components, F(1) - the catalytic core - and F(0) - the membrane proton channel. F(1) has five subunits: alpha(3), beta(3), gamma(1), delta(1), epsilon(1). F(0) has four main subunits: a(1), b(1), b'(1) and c(10-14). The alpha and beta chains form an alternating ring which encloses part of the gamma chain. F(1) is attached to F(0) by a central stalk formed by the gamma and epsilon chains, while a peripheral stalk is formed by the delta, b and b' chains.

Its subcellular location is the plastid. The protein resides in the chloroplast thylakoid membrane. Functionally, f(1)F(0) ATP synthase produces ATP from ADP in the presence of a proton or sodium gradient. F-type ATPases consist of two structural domains, F(1) containing the extramembraneous catalytic core and F(0) containing the membrane proton channel, linked together by a central stalk and a peripheral stalk. During catalysis, ATP synthesis in the catalytic domain of F(1) is coupled via a rotary mechanism of the central stalk subunits to proton translocation. In terms of biological role, component of the F(0) channel, it forms part of the peripheral stalk, linking F(1) to F(0). The protein is ATP synthase subunit b, chloroplastic of Trieres chinensis (Marine centric diatom).